A 2181-amino-acid polypeptide reads, in one-letter code: Non-reducing polyketide synthase dpmaA (2181 aa).

Residues 74-180 (QWVKGNSTQP…LALCCGAYID (107 aa)) form an N-terminal acylcarrier protein transacylase domain (SAT) region. The region spanning 347–779 (QAQLLVLGPV…GTNAAMLVCQ (433 aa)) is the Ketosynthase family 3 (KS3) domain. Residues C525, H661, and H702 each act as for beta-ketoacyl synthase activity in the active site. Residues 891 to 1193 (VLAGQTGRRV…SFYPAALGEP (303 aa)) form a malonyl-CoA:ACP transacylase (MAT) domain region. Residue S977 is the For acyl/malonyl transferase activity of the active site. Residues 1269-1401 (VSLIGKTQNA…GVITLQEVYS (133 aa)) are N-terminal hotdog fold. The region spanning 1269–1579 (VSLIGKTQNA…FQKIAISSLK (311 aa)) is the PKS/mFAS DH domain. The tract at residues 1276 to 1573 (QNAGVQTVEY…TILGAKFQKI (298 aa)) is product template (PT) domain. Residues 1425 to 1579 (SASVVQGDFI…FQKIAISSLK (155 aa)) are C-terminal hotdog fold. Residues 1587–1603 (GVPQTSGGRTPSSSITE) are compositionally biased toward polar residues. Disordered regions lie at residues 1587-1618 (GVPQ…PIPG) and 1652-1675 (ISGS…AMET). Residues 1653 to 1670 (SGSSRSTSSSPPSLESRS) are compositionally biased toward low complexity. In terms of domain architecture, Carrier spans 1677-1753 (EITEGAGSAL…TLFHTIFPQQ (77 aa)). The residue at position 1713 (S1713) is an O-(pantetheine 4'-phosphoryl)serine. Residues 1982-2164 (EFMNCLFSYN…QSGFDHIDWT (183 aa)) form a methyltransferase (CMeT) domain region.

Its pathway is secondary metabolite biosynthesis; terpenoid biosynthesis. Its function is as follows. Non-reducing polyketide synthase; part of the gene cluster that mediates the biosynthesis of the diterpenoid pyrones subglutinols A and B. The first step of the pathway is the synthesis of the alpha-pyrone moiety by the polyketide synthase dpmaA via condensation of one acetyl-CoA starter unit with 3 malonyl-CoA units and 2 methylations. The alpha-pyrone is then combined with geranylgeranyl pyrophosphate (GGPP) formed by the GGPP synthase dpmaD through the action of the prenyltransferase dpmaC to yield a linear alpha-pyrone diterpenoid. Subsequent steps in the diterpenoid pyrone biosynthetic pathway involve the decalin core formation, which is initiated by the epoxidation of the C10-C11 olefin by the FAD-dependent oxidoreductase dpmaE, and is followed by a cyclization cascade catalyzed by the terpene cyclase dpmaB. The dehydrogenase dpmaF is then involved in tetrahydrofuran (THF) ring formation at the C5 unit to complete the formation of subglutinols A and B. The sequence is that of Non-reducing polyketide synthase dpmaA from Metarhizium anisopliae (Entomophthora anisopliae).